The following is a 416-amino-acid chain: Serine hydroxymethyltransferase (416 aa).

(6S)-5,6,7,8-tetrahydrofolate contacts are provided by residues Leu-121 and 125–127 (GHL). Residue Lys-229 is modified to N6-(pyridoxal phosphate)lysine. (6S)-5,6,7,8-tetrahydrofolate is bound at residue 354–356 (SPF).

It belongs to the SHMT family. As to quaternary structure, homodimer. Pyridoxal 5'-phosphate is required as a cofactor.

The protein resides in the cytoplasm. It catalyses the reaction (6R)-5,10-methylene-5,6,7,8-tetrahydrofolate + glycine + H2O = (6S)-5,6,7,8-tetrahydrofolate + L-serine. Its pathway is one-carbon metabolism; tetrahydrofolate interconversion. It participates in amino-acid biosynthesis; glycine biosynthesis; glycine from L-serine: step 1/1. In terms of biological role, catalyzes the reversible interconversion of serine and glycine with tetrahydrofolate (THF) serving as the one-carbon carrier. This reaction serves as the major source of one-carbon groups required for the biosynthesis of purines, thymidylate, methionine, and other important biomolecules. Also exhibits THF-independent aldolase activity toward beta-hydroxyamino acids, producing glycine and aldehydes, via a retro-aldol mechanism. In Halorhodospira halophila (strain DSM 244 / SL1) (Ectothiorhodospira halophila (strain DSM 244 / SL1)), this protein is Serine hydroxymethyltransferase.